The sequence spans 129 residues: Large ribosomal subunit protein bL12c (129 aa).

The protein belongs to the bacterial ribosomal protein bL12 family. As to quaternary structure, homodimer. Part of the ribosomal stalk of the 50S ribosomal subunit. Forms a multimeric L10(L12)X complex, where L10 forms an elongated spine to which 2 to 4 L12 dimers bind in a sequential fashion. Binds GTP-bound translation factors.

Its subcellular location is the plastid. It localises to the chloroplast. Functionally, forms part of the ribosomal stalk which helps the ribosome interact with GTP-bound translation factors. Is thus essential for accurate translation. The chain is Large ribosomal subunit protein bL12c from Oltmannsiellopsis viridis (Marine flagellate).